The chain runs to 37 residues: ATDLQAGYVADSNFTEAWKKVVPNVDPPKTPSAFMXP.

This sequence belongs to the ATPase delta chain family. F-type ATPases have 2 components, CF(1) - the catalytic core - and CF(0) - the membrane proton channel. CF(1) has five subunits: alpha(3), beta(3), gamma(1), delta(1), epsilon(1). CF(0) has three main subunits: a, b and c.

The protein localises to the mitochondrion. It localises to the mitochondrion inner membrane. In terms of biological role, mitochondrial membrane ATP synthase (F(1)F(0) ATP synthase or Complex V) produces ATP from ADP in the presence of a proton gradient across the membrane which is generated by electron transport complexes of the respiratory chain. F-type ATPases consist of two structural domains, F(1) - containing the extramembraneous catalytic core and F(0) - containing the membrane proton channel, linked together by a central stalk and a peripheral stalk. During catalysis, ATP synthesis in the catalytic domain of F(1) is coupled via a rotary mechanism of the central stalk subunits to proton translocation. Part of the complex F(0) domain and the peripheric stalk, which acts as a stator to hold the catalytic alpha(3)beta(3) subcomplex and subunit a/ATP6 static relative to the rotary elements. The polypeptide is ATP synthase subunit O, mitochondrial (Solanum tuberosum (Potato)).